Reading from the N-terminus, the 322-residue chain is Fructose-1,6-bisphosphatase class 1 (322 aa).

Residues Glu-84, Asp-103, Leu-105, and Asp-106 each coordinate Mg(2+). Residues 106–109 (DGSS), Asn-198, and Lys-264 each bind substrate. Glu-270 contributes to the Mg(2+) binding site.

The protein belongs to the FBPase class 1 family. As to quaternary structure, homotetramer. Requires Mg(2+) as cofactor.

The protein resides in the cytoplasm. The catalysed reaction is beta-D-fructose 1,6-bisphosphate + H2O = beta-D-fructose 6-phosphate + phosphate. It functions in the pathway carbohydrate biosynthesis; gluconeogenesis. The protein is Fructose-1,6-bisphosphatase class 1 of Colwellia psychrerythraea (strain 34H / ATCC BAA-681) (Vibrio psychroerythus).